A 393-amino-acid polypeptide reads, in one-letter code: tRNA(Met) cytidine acetate ligase (393 aa).

ATP-binding residues include Gly81, Asn142, and Arg167.

This sequence belongs to the TmcAL family.

It localises to the cytoplasm. The catalysed reaction is cytidine(34) in elongator tRNA(Met) + acetate + ATP = N(4)-acetylcytidine(34) in elongator tRNA(Met) + AMP + diphosphate. Functionally, catalyzes the formation of N(4)-acetylcytidine (ac(4)C) at the wobble position of elongator tRNA(Met), using acetate and ATP as substrates. First activates an acetate ion to form acetyladenylate (Ac-AMP) and then transfers the acetyl group to tRNA to form ac(4)C34. In Bacillus anthracis (strain A0248), this protein is tRNA(Met) cytidine acetate ligase.